Here is a 185-residue protein sequence, read N- to C-terminus: Putative manganese efflux pump MntP (185 aa).

The next 6 helical transmembrane spans lie at 3–23 (PFAVVLLAFSMSVDAFAVSVG), 41–61 (AVFGVVEAITPVIGWVAGVAA), 70–90 (HWLAFGLLAAVGLHMLYAAVW), 101–121 (SFTVLMATAIGTSLDAMAVGV), 123–143 (LAFLNVNIVVVATAIGLATFL), and 165–185 (AVAGIALFGLGLSILIEHLTA).

Belongs to the MntP (TC 9.B.29) family.

The protein localises to the cell inner membrane. Probably functions as a manganese efflux pump. The protein is Putative manganese efflux pump MntP of Bradyrhizobium sp. (strain BTAi1 / ATCC BAA-1182).